Consider the following 432-residue polypeptide: Teosinte glume architecture 1 (432 aa).

2 disordered regions span residues 20–55 and 68–102; these read HAAA…GAPA and ECEP…QQQC. Residues 22–41 are compositionally biased toward low complexity; it reads AAAPSSGGHAANAAAAGTGT. Residues 102–179 form an SBP-type zinc finger; that stretch reads CPSCAVDGCR…DGHNRRRRKP (78 aa). Residues Cys105, Cys110, Cys127, His130, Cys146, Cys149, His153, and Cys165 each contribute to the Zn(2+) site. Gly residues predominate over residues 409–420; sequence GGGSGGGEGSSD. The segment at 409–432 is disordered; that stretch reads GGGSGGGEGSSDGGTSSSMPFSWQ.

As to quaternary structure, monomer and homodimer. As to expression, strongly expressed in immature ears and weakly in husks. Found in the inflorescence meristem of the developing ear, in the spikelet pair primordia, the glume primordia, the cupule forming region and other floral organs. Not detected in other tissues.

In terms of biological role, SBP transcriptional regulator probably involved in the domestication of maize. Acts as a transcriptional repressor binding to a 5'-GTAC-3' motif. May repress the growth of lateral branches in length and numbers. The polypeptide is Teosinte glume architecture 1 (Zea mays (Maize)).